An 85-amino-acid chain; its full sequence is Cytochrome c6 (85 aa).

Positions 14, 17, 18, and 58 each coordinate heme c.

This sequence belongs to the cytochrome c family. PetJ subfamily. Monomer. Post-translationally, binds 1 heme c group covalently per subunit.

Its subcellular location is the plastid. It is found in the chloroplast thylakoid lumen. In terms of biological role, functions as an electron carrier between membrane-bound cytochrome b6-f and photosystem I in oxygenic photosynthesis. This Petalonia fascia (False kelp) protein is Cytochrome c6 (petJ).